Here is a 259-residue protein sequence, read N- to C-terminus: MSGGGGKDRIAVFPSRMAQTLMKTRLKGAQKGHSLLKKKADALNLRFRDILKKIVENKVLMGEVMKEAAFSLAEAKFTAGDFSHTVIQNVSQAQYRVRMKKENVVGVLLPVFDAYQDGPDAYDLTGLGKGGANIARLKKNYNKAIELLVELATLQTCFITLDEAIKVTNRRVNAIEHVIIPRIENTLTYIVTELDEMEREEFFRMKKIQANKKKLKEQEAAQRALEGPPKEEAGGTHSENQPPRNLLAVEEDNLPVLFN.

Residues 214-259 form a disordered region; the sequence is KLKEQEAAQRALEGPPKEEAGGTHSENQPPRNLLAVEEDNLPVLFN.

The protein belongs to the V-ATPase D subunit family. V-ATPase is a heteromultimeric enzyme made up of two complexes: the ATP-hydrolytic V1 complex and the proton translocation V0 complex. The V1 complex consists of three catalytic AB heterodimers that form a heterohexamer, three peripheral stalks each consisting of EG heterodimers, one central rotor including subunits D and F, and the regulatory subunits C and H. The proton translocation complex V0 consists of the proton transport subunit a, a ring of proteolipid subunits c9c'', rotary subunit d, and The proton translocation complex V0 consists of the proton transport subunit a, a ring of proteolipid subunits c9c'', rotary subunit d, subunits e and f, and the accessory subunits vah-19/Ac45 and vah-20/PRR.

In terms of biological role, subunit of the V1 complex of vacuolar(H+)-ATPase (V-ATPase), a multisubunit enzyme composed of a peripheral complex (V1) that hydrolyzes ATP and a membrane integral complex (V0) that translocates protons. V-ATPase is responsible for acidifying and maintaining the pH of intracellular compartments and in some cell types, is targeted to the plasma membrane, where it is responsible for acidifying the extracellular environment. The sequence is that of V-type proton ATPase subunit D from Caenorhabditis briggsae.